A 338-amino-acid polypeptide reads, in one-letter code: Anthranilate phosphoribosyltransferase (338 aa).

5-phospho-alpha-D-ribose 1-diphosphate-binding positions include G81, 84–85 (GD), T89, 91–94 (NIST), 109–117 (KHGNRNLSS), and A121. G81 serves as a coordination point for anthranilate. S93 serves as a coordination point for Mg(2+). N112 contacts anthranilate. R167 contacts anthranilate. Mg(2+) is bound by residues D226 and E227.

The protein belongs to the anthranilate phosphoribosyltransferase family. As to quaternary structure, homodimer. Mg(2+) is required as a cofactor.

It carries out the reaction N-(5-phospho-beta-D-ribosyl)anthranilate + diphosphate = 5-phospho-alpha-D-ribose 1-diphosphate + anthranilate. Its pathway is amino-acid biosynthesis; L-tryptophan biosynthesis; L-tryptophan from chorismate: step 2/5. Functionally, catalyzes the transfer of the phosphoribosyl group of 5-phosphorylribose-1-pyrophosphate (PRPP) to anthranilate to yield N-(5'-phosphoribosyl)-anthranilate (PRA). This Cereibacter sphaeroides (strain ATCC 17023 / DSM 158 / JCM 6121 / CCUG 31486 / LMG 2827 / NBRC 12203 / NCIMB 8253 / ATH 2.4.1.) (Rhodobacter sphaeroides) protein is Anthranilate phosphoribosyltransferase.